The sequence spans 199 residues: Large ribosomal subunit protein bL25 (199 aa).

Belongs to the bacterial ribosomal protein bL25 family. CTC subfamily. As to quaternary structure, part of the 50S ribosomal subunit; part of the 5S rRNA/L5/L18/L25 subcomplex. Contacts the 5S rRNA. Binds to the 5S rRNA independently of L5 and L18.

In terms of biological role, this is one of the proteins that binds to the 5S RNA in the ribosome where it forms part of the central protuberance. This Syntrophobacter fumaroxidans (strain DSM 10017 / MPOB) protein is Large ribosomal subunit protein bL25.